The sequence spans 158 residues: Large ribosomal subunit protein bL21 (158 aa).

Residues serine 106–aspartate 158 are disordered. Over residues proline 115–threonine 143 the composition is skewed to basic and acidic residues. The segment covering glutamine 146–aspartate 158 has biased composition (low complexity).

Belongs to the bacterial ribosomal protein bL21 family. In terms of assembly, part of the 50S ribosomal subunit. Contacts protein L20.

Functionally, this protein binds to 23S rRNA in the presence of protein L20. This Bartonella tribocorum (strain CIP 105476 / IBS 506) protein is Large ribosomal subunit protein bL21.